Consider the following 550-residue polypeptide: Selinene synthase (550 aa).

Mg(2+)-binding residues include Asp-314, Asp-318, Asp-450, and Glu-458. The short motif at 314 to 318 is the DDXXD motif element; it reads DDIYD.

The protein belongs to the terpene synthase family. Requires Mg(2+) as cofactor. It depends on Mn(2+) as a cofactor.

It carries out the reaction (2E,6E)-farnesyl diphosphate = (+)-beta-selinene + diphosphate. The enzyme catalyses (2E,6E)-farnesyl diphosphate = alpha-selinene + diphosphate. The protein operates within secondary metabolite biosynthesis; terpenoid biosynthesis. Functionally, sesquiterpene synthase that catalyzes the formation of alpha- and beta-selinene from trans,trans-farnesyl diphosphate (FPP). Also produces some nerolidol. The polypeptide is Selinene synthase (SES) (Ocimum basilicum (Sweet basil)).